A 202-amino-acid polypeptide reads, in one-letter code: Small ribosomal subunit protein uS4c (202 aa).

In terms of domain architecture, S4 RNA-binding spans 90-151 (MRLDNTIFRL…KQKSRFIITK (62 aa)).

It belongs to the universal ribosomal protein uS4 family. In terms of assembly, part of the 30S ribosomal subunit. Contacts protein S5. The interaction surface between S4 and S5 is involved in control of translational fidelity.

It localises to the plastid. The protein resides in the chloroplast. Functionally, one of the primary rRNA binding proteins, it binds directly to 16S rRNA where it nucleates assembly of the body of the 30S subunit. Its function is as follows. With S5 and S12 plays an important role in translational accuracy. The chain is Small ribosomal subunit protein uS4c (rps4) from Plagiochila adianthoides (Liverwort).